The following is a 405-amino-acid chain: Argininosuccinate synthase (405 aa).

Residues 10–18 and Ala-37 contribute to the ATP site; that span reads AYSGGLDTS. Residues Tyr-88 and Ser-93 each contribute to the L-citrulline site. Gly-118 provides a ligand contact to ATP. L-aspartate contacts are provided by Thr-120, Asn-124, and Asp-125. Position 124 (Asn-124) interacts with L-citrulline. L-citrulline contacts are provided by Arg-128, Ser-179, Ser-188, Glu-264, and Tyr-276.

Belongs to the argininosuccinate synthase family. Type 1 subfamily. As to quaternary structure, homotetramer.

It is found in the cytoplasm. It carries out the reaction L-citrulline + L-aspartate + ATP = 2-(N(omega)-L-arginino)succinate + AMP + diphosphate + H(+). The protein operates within amino-acid biosynthesis; L-arginine biosynthesis; L-arginine from L-ornithine and carbamoyl phosphate: step 2/3. The chain is Argininosuccinate synthase from Ectopseudomonas mendocina (strain ymp) (Pseudomonas mendocina).